The primary structure comprises 237 residues: MTPEVFYKALEDFDIHLNDFQKEQFDIYFQTLVEWNDKINLTAITEKNDVYLKHFYDSIAPILHGYIKNEPIKLLDIGAGAGFPSIPMKIIYPQLDITIIDSLNKRITFLKQLSEVLHLEGVHFFHGRAEDFGQDINFRAQFDIVTARAVARMQILSELTIPFLKLNGKLLALKAQAVDQELTDAQNALKLLFSQVIENNHYQLPNGDSRYITIVEKKKETPRKYPRKAGTPNKKPL.

S-adenosyl-L-methionine-binding positions include Gly-78, Phe-83, 129-130, and Arg-148; that span reads AE. The interval 218-237 is disordered; that stretch reads KKETPRKYPRKAGTPNKKPL.

The protein belongs to the methyltransferase superfamily. RNA methyltransferase RsmG family.

The protein resides in the cytoplasm. In terms of biological role, specifically methylates the N7 position of a guanine in 16S rRNA. In Streptococcus uberis (strain ATCC BAA-854 / 0140J), this protein is Ribosomal RNA small subunit methyltransferase G.